Reading from the N-terminus, the 362-residue chain is Type-1 angiotensin II receptor A (362 aa).

Residues 1–26 (MSNASTVETSDVERIAVNCSKSGMHN) lie on the Extracellular side of the membrane. N-linked (GlcNAc...) asparagine glycans are attached at residues Asn-3 and Asn-18. 2 disulfides stabilise this stretch: Cys-19–Cys-273 and Cys-102–Cys-181. A helical membrane pass occupies residues 27–56 (YIFIAIPIIYSTIFVVGVFGNSMVVIVIYS). At 57 to 62 (YMKMKT) the chain is on the cytoplasmic side. The chain crosses the membrane as a helical span at residues 63–90 (VASIFLMNLALSDLCFVITLPLWAAYTA). Over 91–99 (MHYHWPFGN) the chain is Extracellular. The helical transmembrane segment at 100–126 (FLCKVASTAITLNLYTTVFLLTCLSID) threads the bilayer. The Cytoplasmic portion of the chain corresponds to 127–142 (RYSAIVHPMKSRIWRT). The helical transmembrane segment at 143-166 (AMVARLTCVGIWLVAFLASMPSII) threads the bilayer. The Extracellular segment spans residues 167–191 (YRQIYLFHDTNQTVCAIVYDSGHIY). An angiotensin II-binding site is contributed by Arg-168. Residue Asn-177 is glycosylated (N-linked (GlcNAc...) asparagine). Angiotensin II-binding residues include Tyr-185 and Lys-200. A helical membrane pass occupies residues 192 to 217 (FMVGMSLAKNIVGFLIPFLIILTSYT). Residues 218–238 (LIGKTLKEVYRAQRARNDDIF) lie on the Cytoplasmic side of the membrane. The chain crosses the membrane as a helical span at residues 239–267 (KMIVAVVLLFFFCWIPYQVFTFLDVLIQM). Residues 268–277 (DVIQNCKMYD) lie on the Extracellular side of the membrane. Residues 278-303 (IVDTGMPITICIAYFNSCLNPFLYGF) traverse the membrane as a helical segment. Residues 304–362 (FGKNFRKHFLQLIKYIPPKMRTHASVNTKSSLVSSSLSDTKRASKKIALQMTDNEEHCK) lie on the Cytoplasmic side of the membrane. Cys-361 is lipidated: S-palmitoyl cysteine.

Belongs to the G-protein coupled receptor 1 family. Post-translationally, C-terminal Ser or Thr residues may be phosphorylated. In terms of tissue distribution, expressed in lung, liver, kidney, and spleen, with highest expression in the heart.

The protein localises to the cell membrane. Receptor for angiotensin II, a vasoconstricting peptide, which acts as a key regulator of blood pressure and sodium retention by the kidney. The activated receptor in turn couples to G-alpha proteins G(q) (GNAQ, GNA11, GNA14 or GNA15) and thus activates phospholipase C and increases the cytosolic Ca(2+) concentrations, which in turn triggers cellular responses such as stimulation of protein kinase C. The chain is Type-1 angiotensin II receptor A (agtr1-a) from Xenopus laevis (African clawed frog).